Reading from the N-terminus, the 523-residue chain is La-related protein 1C (523 aa).

The segment covering 1 to 16 (MASATSNNPASSSMSP) has biased composition (low complexity). Disordered regions lie at residues 1–52 (MASA…VRGE) and 95–313 (AAGD…VRHP). Position 2 is an N-acetylalanine (A2). Positions 22–31 (NHGSPTASVA) are enriched in polar residues. Low complexity-rich tracts occupy residues 32-44 (QSPRRPSRQVSSP) and 146-169 (SNKSSSDSLKSLGDVPSSSSASSS). The residue at position 33 (S33) is a Phosphoserine. 2 stretches are compositionally biased toward polar residues: residues 206 to 270 (QRNG…NGNH) and 282 to 305 (HGNQNWTFQRSFNGREGNAQSQRG). The region spanning 363-452 (HYQDPPLHMK…RDNWQNWVLR (90 aa)) is the HTH La-type RNA-binding domain. The disordered stretch occupies residues 474 to 523 (GNLSVDQSSADPIGGSSSQLQPTEALSDDQQQSSSTAPVSNHNAPDGANR). Residues 477–516 (SVDQSSADPIGGSSSQLQPTEALSDDQQQSSSTAPVSNHN) are compositionally biased toward polar residues.

It belongs to the LARP family. As to expression, age-dependent accumulation in rosette leaves.

It localises to the cytoplasm. Promotes leaf senescence mediated by abscisic acid (ABA), salicylic acid (SA) and jasmonic acid (MeJA), probably though the induction of expression of senescence-associated genes (SAGs) and defense-related genes. This is La-related protein 1C (LARP1C) from Arabidopsis thaliana (Mouse-ear cress).